Reading from the N-terminus, the 206-residue chain is Inner membrane-spanning protein YciB (206 aa).

Helical transmembrane passes span 50-70, 78-98, 105-125, 150-170, and 173-193; these read PILL…GYLL, GTLW…IYFH, WKPT…QIFL, LSWV…AFNF, and AAWV…FIII.

Belongs to the YciB family.

Its subcellular location is the cell inner membrane. Plays a role in cell envelope biogenesis, maintenance of cell envelope integrity and membrane homeostasis. The polypeptide is Inner membrane-spanning protein YciB (Herminiimonas arsenicoxydans).